A 311-amino-acid polypeptide reads, in one-letter code: Alpha/beta hydrolase domain-containing protein 17C (311 aa).

The disordered stretch occupies residues 48–67 (EAPASTAQQPPREEGSGEPA). Residues Ser-193, Asp-258, and His-287 each act as charge relay system in the active site.

This sequence belongs to the AB hydrolase superfamily. ABHD17 family. Post-translationally, palmitoylated on cysteine residues located in a cysteine cluster at the N-terminus which promotes membrane localization.

It is found in the recycling endosome membrane. Its subcellular location is the cell projection. It localises to the dendritic spine. The protein resides in the postsynaptic density membrane. It catalyses the reaction S-hexadecanoyl-L-cysteinyl-[protein] + H2O = L-cysteinyl-[protein] + hexadecanoate + H(+). Functionally, hydrolyzes fatty acids from S-acylated cysteine residues in proteins. Has depalmitoylating activity towards NRAS. In Xenopus laevis (African clawed frog), this protein is Alpha/beta hydrolase domain-containing protein 17C.